A 369-amino-acid polypeptide reads, in one-letter code: Phospho-N-acetylmuramoyl-pentapeptide-transferase (369 aa).

Helical transmembrane passes span 2-22 (IAIL…TPFF), 54-74 (GLVI…FLGL), 80-100 (GLLV…DDIL), 113-133 (FYKV…TFLV), 158-178 (ALFS…LLWI), 195-215 (LDGL…VIGF), 241-261 (PLDM…FLWW), 268-288 (IMMG…LSIL), 293-313 (LLFL…ILQI), and 347-367 (FWII…ADWL).

The protein belongs to the glycosyltransferase 4 family. MraY subfamily. The cofactor is Mg(2+).

The protein resides in the cell membrane. It catalyses the reaction UDP-N-acetyl-alpha-D-muramoyl-L-alanyl-gamma-D-glutamyl-meso-2,6-diaminopimeloyl-D-alanyl-D-alanine + di-trans,octa-cis-undecaprenyl phosphate = di-trans,octa-cis-undecaprenyl diphospho-N-acetyl-alpha-D-muramoyl-L-alanyl-D-glutamyl-meso-2,6-diaminopimeloyl-D-alanyl-D-alanine + UMP. It functions in the pathway cell wall biogenesis; peptidoglycan biosynthesis. In terms of biological role, catalyzes the initial step of the lipid cycle reactions in the biosynthesis of the cell wall peptidoglycan: transfers peptidoglycan precursor phospho-MurNAc-pentapeptide from UDP-MurNAc-pentapeptide onto the lipid carrier undecaprenyl phosphate, yielding undecaprenyl-pyrophosphoryl-MurNAc-pentapeptide, known as lipid I. This Tropheryma whipplei (strain Twist) (Whipple's bacillus) protein is Phospho-N-acetylmuramoyl-pentapeptide-transferase.